The chain runs to 272 residues: Exosome complex component Rrp42 (272 aa).

It belongs to the RNase PH family. Rrp42 subfamily. As to quaternary structure, component of the archaeal exosome complex. Forms a hexameric ring-like arrangement composed of 3 Rrp41-Rrp42 heterodimers. The hexameric ring associates with a trimer of Rrp4 and/or Csl4 subunits.

Its subcellular location is the cytoplasm. Functionally, non-catalytic component of the exosome, which is a complex involved in RNA degradation. Contributes to the structuring of the Rrp41 active site. The chain is Exosome complex component Rrp42 from Thermococcus onnurineus (strain NA1).